A 120-amino-acid chain; its full sequence is uncharacterized protein (120 aa).

Residues 29–120 (QRQAAVLVPI…QVTPVVGIIP (92 aa)) form the Nudix hydrolase domain. The Nudix box signature appears at 67 to 89 (GAVDNSDATLIAAALREAQEEVA). Mg(2+)-binding residues include glutamate 83 and glutamate 87.

Belongs to the Nudix hydrolase family. PCD1 subfamily. Mn(2+) is required as a cofactor. Requires Mg(2+) as cofactor.

Functionally, probably mediates the hydrolysis of some nucleoside diphosphate derivatives. This is an uncharacterized protein from Klebsiella aerogenes (Enterobacter aerogenes).